A 425-amino-acid polypeptide reads, in one-letter code: 3-phosphoshikimate 1-carboxyvinyltransferase (425 aa).

3-phosphoshikimate-binding residues include Lys-21, Ser-22, and Arg-26. Residue Lys-21 coordinates phosphoenolpyruvate. 2 residues coordinate phosphoenolpyruvate: Gly-91 and Arg-119. 3-phosphoshikimate contacts are provided by Ser-164, Gln-166, Asp-311, and Lys-338. Phosphoenolpyruvate is bound at residue Gln-166. Asp-311 acts as the Proton acceptor in catalysis. Positions 342 and 383 each coordinate phosphoenolpyruvate.

This sequence belongs to the EPSP synthase family. Monomer.

It localises to the cytoplasm. It catalyses the reaction 3-phosphoshikimate + phosphoenolpyruvate = 5-O-(1-carboxyvinyl)-3-phosphoshikimate + phosphate. It functions in the pathway metabolic intermediate biosynthesis; chorismate biosynthesis; chorismate from D-erythrose 4-phosphate and phosphoenolpyruvate: step 6/7. Its function is as follows. Catalyzes the transfer of the enolpyruvyl moiety of phosphoenolpyruvate (PEP) to the 5-hydroxyl of shikimate-3-phosphate (S3P) to produce enolpyruvyl shikimate-3-phosphate and inorganic phosphate. This Campylobacter fetus subsp. fetus (strain 82-40) protein is 3-phosphoshikimate 1-carboxyvinyltransferase.